The sequence spans 366 residues: Sulfite reductase, dissimilatory-type subunit beta (366 aa).

Cysteine 140, cysteine 177, cysteine 178, cysteine 182, cysteine 220, cysteine 241, cysteine 244, and cysteine 247 together coordinate [4Fe-4S] cluster. Cysteine 182 serves as a coordination point for siroheme. The 4Fe-4S ferredoxin-type domain maps to 232 to 262 (KTIKVDVEKCMYCGNCYTMCPGMPLFDPEND).

In terms of assembly, heterotetramer of two alpha and two beta subunits. [4Fe-4S] cluster is required as a cofactor. Siroheme serves as cofactor.

It localises to the membrane. The catalysed reaction is [DsrC protein]-trisulfide + NAD(+) + 3 H2O = [DsrC protein]-dithiol + sulfite + NADH + 3 H(+). In terms of biological role, catalyzes the reduction of sulfite to sulfide. This is the terminal oxidation reaction in sulfate respiration. The protein is Sulfite reductase, dissimilatory-type subunit beta (dsrB) of Archaeoglobus fulgidus (strain ATCC 49558 / DSM 4304 / JCM 9628 / NBRC 100126 / VC-16).